We begin with the raw amino-acid sequence, 143 residues long: Nucleoside diphosphate kinase (143 aa).

ATP is bound by residues Lys11, Phe59, Arg87, Thr93, Arg104, and Asn114. Catalysis depends on His117, which acts as the Pros-phosphohistidine intermediate.

This sequence belongs to the NDK family. As to quaternary structure, homotetramer. Requires Mg(2+) as cofactor.

Its subcellular location is the cytoplasm. The catalysed reaction is a 2'-deoxyribonucleoside 5'-diphosphate + ATP = a 2'-deoxyribonucleoside 5'-triphosphate + ADP. It carries out the reaction a ribonucleoside 5'-diphosphate + ATP = a ribonucleoside 5'-triphosphate + ADP. Functionally, major role in the synthesis of nucleoside triphosphates other than ATP. The ATP gamma phosphate is transferred to the NDP beta phosphate via a ping-pong mechanism, using a phosphorylated active-site intermediate. This is Nucleoside diphosphate kinase from Colwellia psychrerythraea (strain 34H / ATCC BAA-681) (Vibrio psychroerythus).